We begin with the raw amino-acid sequence, 489 residues long: Aspartyl/glutamyl-tRNA(Asn/Gln) amidotransferase subunit B (489 aa).

This sequence belongs to the GatB/GatE family. GatB subfamily. As to quaternary structure, heterotrimer of A, B and C subunits.

The enzyme catalyses L-glutamyl-tRNA(Gln) + L-glutamine + ATP + H2O = L-glutaminyl-tRNA(Gln) + L-glutamate + ADP + phosphate + H(+). The catalysed reaction is L-aspartyl-tRNA(Asn) + L-glutamine + ATP + H2O = L-asparaginyl-tRNA(Asn) + L-glutamate + ADP + phosphate + 2 H(+). Functionally, allows the formation of correctly charged Asn-tRNA(Asn) or Gln-tRNA(Gln) through the transamidation of misacylated Asp-tRNA(Asn) or Glu-tRNA(Gln) in organisms which lack either or both of asparaginyl-tRNA or glutaminyl-tRNA synthetases. The reaction takes place in the presence of glutamine and ATP through an activated phospho-Asp-tRNA(Asn) or phospho-Glu-tRNA(Gln). The sequence is that of Aspartyl/glutamyl-tRNA(Asn/Gln) amidotransferase subunit B from Polynucleobacter asymbioticus (strain DSM 18221 / CIP 109841 / QLW-P1DMWA-1) (Polynucleobacter necessarius subsp. asymbioticus).